The primary structure comprises 389 residues: Alanine racemase 1 (389 aa).

The Proton acceptor; specific for D-alanine role is filled by Lys-41. Position 41 is an N6-(pyridoxal phosphate)lysine (Lys-41). Residue Arg-137 participates in substrate binding. Catalysis depends on Tyr-266, which acts as the Proton acceptor; specific for L-alanine. Met-313 provides a ligand contact to substrate.

It belongs to the alanine racemase family. The cofactor is pyridoxal 5'-phosphate.

The enzyme catalyses L-alanine = D-alanine. It participates in amino-acid biosynthesis; D-alanine biosynthesis; D-alanine from L-alanine: step 1/1. Its function is as follows. Catalyzes the interconversion of L-alanine and D-alanine. May also act on other amino acids. This chain is Alanine racemase 1 (alr1), found in Bacillus subtilis (strain 168).